Here is a 98-residue protein sequence, read N- to C-terminus: uncharacterized protein (98 aa).

Residues 1-19 (MTERRRALSLAAVVDSINL) form the signal peptide. The tract at residues 40-98 (PPGGSFSGIKRESRRKRPSRNEIYGGGVLEQEVRMRRWSKTASPPVSLHHRPLGPARKP) is disordered. Over residues 87–98 (LHHRPLGPARKP) the composition is skewed to basic residues.

This is an uncharacterized protein from Homo sapiens (Human).